The following is a 498-amino-acid chain: DNA-directed RNA polymerase subunit Rpo2N (498 aa).

The protein belongs to the RNA polymerase beta chain family. Part of the RNA polymerase complex.

It is found in the cytoplasm. The enzyme catalyses RNA(n) + a ribonucleoside 5'-triphosphate = RNA(n+1) + diphosphate. DNA-dependent RNA polymerase (RNAP) catalyzes the transcription of DNA into RNA using the four ribonucleoside triphosphates as substrates. The Rpo2 subunit (Rpo2N and Rpo2C in this organism) is implicated in DNA promoter recognition and in nucleotide binding. This is DNA-directed RNA polymerase subunit Rpo2N from Methanocaldococcus jannaschii (strain ATCC 43067 / DSM 2661 / JAL-1 / JCM 10045 / NBRC 100440) (Methanococcus jannaschii).